Consider the following 484-residue polypeptide: ATP synthase subunit beta (484 aa).

168 to 175 (GGAGVGKT) serves as a coordination point for ATP.

It belongs to the ATPase alpha/beta chains family. In terms of assembly, F-type ATPases have 2 components, CF(1) - the catalytic core - and CF(0) - the membrane proton channel. CF(1) has five subunits: alpha(3), beta(3), gamma(1), delta(1), epsilon(1). CF(0) has three main subunits: a(1), b(2) and c(9-12). The alpha and beta chains form an alternating ring which encloses part of the gamma chain. CF(1) is attached to CF(0) by a central stalk formed by the gamma and epsilon chains, while a peripheral stalk is formed by the delta and b chains.

Its subcellular location is the cell membrane. The catalysed reaction is ATP + H2O + 4 H(+)(in) = ADP + phosphate + 5 H(+)(out). In terms of biological role, produces ATP from ADP in the presence of a proton gradient across the membrane. The catalytic sites are hosted primarily by the beta subunits. This Arthrobacter sp. (strain FB24) protein is ATP synthase subunit beta.